A 506-amino-acid polypeptide reads, in one-letter code: Probable Xaa-Pro aminopeptidase BDCG_04966 (506 aa).

Mn(2+) is bound by residues Asp-285, Asp-296, Glu-433, and Glu-471.

It belongs to the peptidase M24B family. Mn(2+) is required as a cofactor.

It catalyses the reaction Release of any N-terminal amino acid, including proline, that is linked to proline, even from a dipeptide or tripeptide.. Functionally, catalyzes the removal of a penultimate prolyl residue from the N-termini of peptides. The chain is Probable Xaa-Pro aminopeptidase BDCG_04966 from Ajellomyces dermatitidis (strain ER-3 / ATCC MYA-2586) (Blastomyces dermatitidis).